The primary structure comprises 434 residues: 3-phosphoshikimate 1-carboxyvinyltransferase (434 aa).

3-phosphoshikimate-binding residues include Lys22, Ser23, and Arg27. Position 22 (Lys22) interacts with phosphoenolpyruvate. Gly93 and Arg121 together coordinate phosphoenolpyruvate. Ser168, Ser169, Gln170, Ser199, Asp320, and Lys347 together coordinate 3-phosphoshikimate. Gln170 is a binding site for phosphoenolpyruvate. Asp320 (proton acceptor) is an active-site residue. Phosphoenolpyruvate contacts are provided by Arg351, Arg395, and Lys420.

This sequence belongs to the EPSP synthase family. As to quaternary structure, monomer.

It is found in the cytoplasm. It catalyses the reaction 3-phosphoshikimate + phosphoenolpyruvate = 5-O-(1-carboxyvinyl)-3-phosphoshikimate + phosphate. Its pathway is metabolic intermediate biosynthesis; chorismate biosynthesis; chorismate from D-erythrose 4-phosphate and phosphoenolpyruvate: step 6/7. Its function is as follows. Catalyzes the transfer of the enolpyruvyl moiety of phosphoenolpyruvate (PEP) to the 5-hydroxyl of shikimate-3-phosphate (S3P) to produce enolpyruvyl shikimate-3-phosphate and inorganic phosphate. In Cupriavidus necator (strain ATCC 17699 / DSM 428 / KCTC 22496 / NCIMB 10442 / H16 / Stanier 337) (Ralstonia eutropha), this protein is 3-phosphoshikimate 1-carboxyvinyltransferase.